The chain runs to 103 residues: Large ribosomal subunit protein mL63 (103 aa).

This sequence belongs to the mitochondrion-specific ribosomal protein mL63 family.

The protein resides in the mitochondrion. The sequence is that of Large ribosomal subunit protein mL63 (mrpl57) from Danio rerio (Zebrafish).